Consider the following 171-residue polypeptide: Shikimate kinase (171 aa).

14-19 (GAGKST) contacts ATP. Ser-18 contacts Mg(2+). Substrate is bound by residues Asp-36, Arg-60, and Gly-82. Arg-120 contacts ATP. Arg-139 contributes to the substrate binding site. Gln-156 provides a ligand contact to ATP.

Belongs to the shikimate kinase family. As to quaternary structure, monomer. Requires Mg(2+) as cofactor.

It localises to the cytoplasm. It carries out the reaction shikimate + ATP = 3-phosphoshikimate + ADP + H(+). Its pathway is metabolic intermediate biosynthesis; chorismate biosynthesis; chorismate from D-erythrose 4-phosphate and phosphoenolpyruvate: step 5/7. Functionally, catalyzes the specific phosphorylation of the 3-hydroxyl group of shikimic acid using ATP as a cosubstrate. This Shewanella sediminis (strain HAW-EB3) protein is Shikimate kinase.